A 502-amino-acid chain; its full sequence is ATP synthase subunit alpha (502 aa).

169–176 (GDRQTGKT) serves as a coordination point for ATP.

It belongs to the ATPase alpha/beta chains family. As to quaternary structure, F-type ATPases have 2 components, CF(1) - the catalytic core - and CF(0) - the membrane proton channel. CF(1) has five subunits: alpha(3), beta(3), gamma(1), delta(1), epsilon(1). CF(0) has three main subunits: a(1), b(2) and c(9-12). The alpha and beta chains form an alternating ring which encloses part of the gamma chain. CF(1) is attached to CF(0) by a central stalk formed by the gamma and epsilon chains, while a peripheral stalk is formed by the delta and b chains.

It is found in the cell inner membrane. It catalyses the reaction ATP + H2O + 4 H(+)(in) = ADP + phosphate + 5 H(+)(out). Produces ATP from ADP in the presence of a proton gradient across the membrane. The alpha chain is a regulatory subunit. This Desulfovibrio desulfuricans (strain ATCC 27774 / DSM 6949 / MB) protein is ATP synthase subunit alpha.